The sequence spans 256 residues: NAD-dependent protein deacylase 2 (256 aa).

In terms of domain architecture, Deacetylase sirtuin-type spans 1 to 256 (MDSHSPIATV…MPQVVSHIYR (256 aa)). Residues 25-44 (GAGL…GGLY) and 108-111 (QNID) contribute to the NAD(+) site. Residue H128 is the Proton acceptor of the active site. Zn(2+) is bound by residues C136, C139, C158, and C161. Residues 199–201 (GTT), 225–227 (NPG), and A243 contribute to the NAD(+) site.

It belongs to the sirtuin family. Class III subfamily. The cofactor is Zn(2+).

Its subcellular location is the cytoplasm. It catalyses the reaction N(6)-acetyl-L-lysyl-[protein] + NAD(+) + H2O = 2''-O-acetyl-ADP-D-ribose + nicotinamide + L-lysyl-[protein]. NAD-dependent protein deacetylase which modulates the activities of several proteins which are inactive in their acetylated form. In Pseudomonas aeruginosa (strain ATCC 15692 / DSM 22644 / CIP 104116 / JCM 14847 / LMG 12228 / 1C / PRS 101 / PAO1), this protein is NAD-dependent protein deacylase 2 (cobB2).